Consider the following 208-residue polypeptide: Outer-membrane lipoprotein carrier protein (208 aa).

Positions Met-1–Ala-22 are cleaved as a signal peptide.

It belongs to the LolA family. As to quaternary structure, monomer.

The protein localises to the periplasm. In terms of biological role, participates in the translocation of lipoproteins from the inner membrane to the outer membrane. Only forms a complex with a lipoprotein if the residue after the N-terminal Cys is not an aspartate (The Asp acts as a targeting signal to indicate that the lipoprotein should stay in the inner membrane). The chain is Outer-membrane lipoprotein carrier protein from Shewanella halifaxensis (strain HAW-EB4).